A 441-amino-acid polypeptide reads, in one-letter code: GTPase Der (441 aa).

EngA-type G domains lie at 2–164 and 173–343; these read HKVA…PADD and IRIS…DKWQ. Residues 8-15, 55-59, 116-119, 179-186, 226-230, and 288-291 contribute to the GTP site; these read GRPNVGKS, DTGGL, NKID, DTAGI, and NKWD.

This sequence belongs to the TRAFAC class TrmE-Era-EngA-EngB-Septin-like GTPase superfamily. EngA (Der) GTPase family. In terms of assembly, associates with the 50S ribosomal subunit.

In terms of biological role, GTPase that plays an essential role in the late steps of ribosome biogenesis. The protein is GTPase Der of Deinococcus deserti (strain DSM 17065 / CIP 109153 / LMG 22923 / VCD115).